Here is a 913-residue protein sequence, read N- to C-terminus: Striatin-interacting protein homolog (913 aa).

Low complexity-rich tracts occupy residues 177–188, 195–204, and 791–811; these read QQQQQQQQNENE, TNFTTTTTTT, and NNNN…NNDN. 2 disordered regions span residues 177–204 and 791–814; these read QQQQ…TTTT and NNNN…NGLT.

It belongs to the STRIP family.

The protein is Striatin-interacting protein homolog (fam40) of Dictyostelium discoideum (Social amoeba).